A 505-amino-acid polypeptide reads, in one-letter code: Beta-agarase (505 aa).

The first 23 residues, 1-23 (MLKVIPWLLVTSSLVAIPTYIHA), serve as a signal peptide directing secretion. The active-site Proton donor is the Glu-200. Catalysis depends on Glu-322, which acts as the Nucleophile.

Belongs to the glycosyl hydrolase 86 family.

The protein localises to the secreted. The enzyme catalyses Hydrolysis of (1-&gt;4)-beta-D-galactosidic linkages in agarose, giving the tetramer as the predominant product.. Functionally, hydrolase that cleaves agar at the (1-&gt;4) linkage, producing tetrameric saccharide molecules. Is specific for agar and agarose and does not digest alginate or carrageenan. This Pseudoalteromonas atlantica (Alteromonas atlantica) protein is Beta-agarase.